We begin with the raw amino-acid sequence, 560 residues long: Light-independent protochlorophyllide reductase subunit N (560 aa).

The [4Fe-4S] cluster site is built by Cys-24, Cys-49, and Cys-109. Positions 173 to 182 (NSLFNQSSNS) are enriched in low complexity. The disordered stretch occupies residues 173–210 (NSLFNQSSNSPENLKTLNTKKDTFQNSTENSKTFSAEK). The segment covering 196 to 206 (FQNSTENSKTF) has biased composition (polar residues).

It belongs to the BchN/ChlN family. As to quaternary structure, protochlorophyllide reductase is composed of three subunits; ChlL, ChlN and ChlB. Forms a heterotetramer of two ChlB and two ChlN subunits. Requires [4Fe-4S] cluster as cofactor.

The protein resides in the plastid. The protein localises to the chloroplast. It catalyses the reaction chlorophyllide a + oxidized 2[4Fe-4S]-[ferredoxin] + 2 ADP + 2 phosphate = protochlorophyllide a + reduced 2[4Fe-4S]-[ferredoxin] + 2 ATP + 2 H2O. Its pathway is porphyrin-containing compound metabolism; chlorophyll biosynthesis (light-independent). Component of the dark-operative protochlorophyllide reductase (DPOR) that uses Mg-ATP and reduced ferredoxin to reduce ring D of protochlorophyllide (Pchlide) to form chlorophyllide a (Chlide). This reaction is light-independent. The NB-protein (ChlN-ChlB) is the catalytic component of the complex. In Tetradesmus obliquus (Green alga), this protein is Light-independent protochlorophyllide reductase subunit N.